Here is a 307-residue protein sequence, read N- to C-terminus: Type 2A encapsulin shell protein (307 aa).

This sequence belongs to the encapsulin family. Family 2A subfamily. As to quaternary structure, the encapsulin nanocompartment is formed by 60 subunits; monomers form pentamers which assemble to form shells. There are 12 charged pores where the pentamers meet as well as 3-fold axis channels and dimer channels. Isolated from bacteria in a complex with cysteine desulfurase (AC Q9KII6).

The protein resides in the encapsulin nanocompartment. Its subcellular location is the cell membrane. In terms of biological role, shell component of a type 2A encapsulin nanocompartment. Forms encapsulin nanocompartments about 24 nm in diameter from 60 monomers, probably involved in sulfur metabolism. Probably encapsulates cysteine desulfurase. The sequence is that of Type 2A encapsulin shell protein from Mycolicibacterium paratuberculosis (strain ATCC BAA-968 / K-10) (Mycobacterium paratuberculosis).